The chain runs to 449 residues: Hyaluronidase-1 (449 aa).

The N-terminal stretch at 1 to 23 is a signal peptide; the sequence is MYHLWIKCLAAWIFLKRCNGVHA. 2 disulfides stabilise this stretch: cysteine 47-cysteine 340 and cysteine 211-cysteine 227. N-linked (GlcNAc...) asparagine glycosylation is found at asparagine 67, asparagine 103, and asparagine 111. The Proton donor role is filled by glutamate 135. The N-linked (GlcNAc...) asparagine glycan is linked to asparagine 153. The N-linked (GlcNAc...) asparagine glycan is linked to asparagine 357. Cystine bridges form between cysteine 365–cysteine 376, cysteine 370–cysteine 427, and cysteine 429–cysteine 438. N-linked (GlcNAc...) asparagine glycosylation occurs at asparagine 401. The 12-residue stretch at 427-438 folds into the EGF-like domain; that stretch reads CQCYQGWKGLYC.

It belongs to the glycosyl hydrolase 56 family. As to quaternary structure, monomer. As to expression, expressed by the venom gland.

It is found in the secreted. The enzyme catalyses Random hydrolysis of (1-&gt;4)-linkages between N-acetyl-beta-D-glucosamine and D-glucuronate residues in hyaluronate.. Snake venom endo-hyaluronidase that degrades hyaluronan to smaller oligosaccharide fragments. In venom, it is not toxic by itself, but increases the diffusion of other venom proteins by degrading the extracellular matrix. In addition, it displays antiedematogenic activity. The chain is Hyaluronidase-1 from Bitis arietans (African puff adder).